Here is a 397-residue protein sequence, read N- to C-terminus: Thioredoxin-interacting protein (397 aa).

A Glycyl lysine isopeptide (Lys-Gly) (interchain with G-Cter in ubiquitin) cross-link involves residue K213. Position 362 is a phosphoserine (S362).

Belongs to the arrestin family. In terms of assembly, homodimer; disulfide-linked. Interacts with TXN/thioredoxin through its redox-active site. Interacts with transcriptional repressors ZBTB16, ZBTB32 and HDAC1. Interacts with DDIT4. Ubiquitinated; undergoes heterotypic 'Lys-48'-/'Lys-63'-branched polyubiquitination catalyzed by ITCH and UBR5 resulting in proteasomal degradation. Deubiquitinated by USP5, leading to TXNIP stabilization. Ubiquitously expressed.

The protein resides in the cytoplasm. May act as an oxidative stress mediator by inhibiting thioredoxin activity or by limiting its bioavailability. Interacts with COPS5 and restores COPS5-induced suppression of CDKN1B stability, blocking the COPS5-mediated translocation of CDKN1B from the nucleus to the cytoplasm. Functions as a transcriptional repressor, possibly by acting as a bridge molecule between transcription factors and corepressor complexes, and over-expression will induce G0/G1 cell cycle arrest. Required for the maturation of natural killer cells. Acts as a suppressor of tumor cell growth. Inhibits the proteasomal degradation of DDIT4, and thereby contributes to the inhibition of the mammalian target of rapamycin complex 1 (mTORC1). The protein is Thioredoxin-interacting protein (Txnip) of Mus musculus (Mouse).